We begin with the raw amino-acid sequence, 152 residues long: D-aminoacyl-tRNA deacylase (152 aa).

A Gly-cisPro motif, important for rejection of L-amino acids motif is present at residues 137–138; that stretch reads GP.

Belongs to the DTD family. As to quaternary structure, homodimer.

The protein localises to the cytoplasm. It catalyses the reaction glycyl-tRNA(Ala) + H2O = tRNA(Ala) + glycine + H(+). It carries out the reaction a D-aminoacyl-tRNA + H2O = a tRNA + a D-alpha-amino acid + H(+). In terms of biological role, an aminoacyl-tRNA editing enzyme that deacylates mischarged D-aminoacyl-tRNAs. Also deacylates mischarged glycyl-tRNA(Ala), protecting cells against glycine mischarging by AlaRS. Acts via tRNA-based rather than protein-based catalysis; rejects L-amino acids rather than detecting D-amino acids in the active site. By recycling D-aminoacyl-tRNA to D-amino acids and free tRNA molecules, this enzyme counteracts the toxicity associated with the formation of D-aminoacyl-tRNA entities in vivo and helps enforce protein L-homochirality. In Aromatoleum aromaticum (strain DSM 19018 / LMG 30748 / EbN1) (Azoarcus sp. (strain EbN1)), this protein is D-aminoacyl-tRNA deacylase.